The primary structure comprises 1086 residues: Sterol regulatory element-binding protein cleavage-activating protein (1086 aa).

The Cytoplasmic segment spans residues 1–35 (MRIFTLGKGRISRGYARQVNPSLFAKYSYCIANNP). The helical transmembrane segment at 36 to 56 (WYFILVFTLLSITGIYSSLVA) threads the bilayer. Over 57–229 (YQQSLYDQSL…TVVARIPDLT (173 aa)) the chain is Lumenal. Residues asparagine 94 and asparagine 168 are each glycosylated (N-linked (GlcNAc...) asparagine). The chain crosses the membrane as a helical span at residues 230–250 (VIYRWYLWVGFGVGLFAYLYL). Residues 233–391 (RWYLWVGFGV…GSFFLAVLSV (159 aa)) enclose the SSD domain. At 251-265 (SLVRLHDIRAKFGLT) the chain is on the cytoplasmic side. A helical membrane pass occupies residues 266 to 286 (ATIFIQSGTAYFSTCSLLYFF). Residues 287–290 (ERTG) are Lumenal-facing. Residues 291–311 (PICPWPMAYYIIIFMDIENSF) form a helical membrane-spanning segment. The Cytoplasmic portion of the chain corresponds to 312–337 (RLLRAVIASPQTKRVPSRIMEGFSST). A helical membrane pass occupies residues 338 to 358 (IIASFSSLLKKLLTLFVLSFF). Over 359 to 367 (VYPLVQEFC) the chain is Lumenal. A helical transmembrane segment spans residues 368–388 (LFLACSFVVSFLLHGSFFLAV). Residues 389–422 (LSVDIRRLELQDFLDSNSSNRNSKWWVPYLEYVR) lie on the Cytoplasmic side of the membrane. Residues 396-401 (LELQDF) carry the ER export signal motif. A helical membrane pass occupies residues 423-443 (FMWSPWIIDNLGTVSFHMYVI). The Lumenal portion of the chain corresponds to 444–544 (YLQLQSSTDI…FHDRRVWRWS (101 aa)). Asparagine 454 carries N-linked (GlcNAc...) asparagine glycosylation. Residues 545 to 565 (TFFSILFAIDFAVGLLVKALL) traverse the membrane as a helical segment. Over 566-1086 (RGWSDHDELS…QRKRSGTIGC (521 aa)) the chain is Cytoplasmic. WD repeat units follow at residues 593–632 (HHQL…TKLV), 637–675 (QMPR…LMLQ), 680–727 (CKPN…EGAD), 736–776 (LSSP…WSPK), and 963–1009 (GHYN…KKHR). The interval 640–1086 (RTLKAIALDP…QRKRSGTIGC (447 aa)) is interaction with sre1.

Belongs to the WD repeat SCAP family. In terms of assembly, forms a tight complex with scp1, composed of 4 copies of scp1 and 4 copies of sre1.

It is found in the endoplasmic reticulum membrane. It localises to the golgi apparatus membrane. In terms of biological role, escort protein required for sre1 processing at low sterol as well as oxygen levels. May regulate export of the scp1/sre1 complex from the ER at low sterol or oxygen levels. 4-methyl sterols bound to scp1 may mask an ER export signal in scp1 leading to retention of the complex in the ER. Release of 4-methyl sterols may trigger a conformational change in the SSD domain of scp1 unmasking the ER export signal leading to recruitment into COPII-coated vesicles, transport to the Golgi complex, proteolytic cleavage of sre1 in the Golgi, release of the transcription factor fragment of sre1 from the membrane, its import into the nucleus and up-regulation of genes required for ergosterol biosynthesis as well as anaerobic growth. Binds 4-methyl sterols. The protein is Sterol regulatory element-binding protein cleavage-activating protein of Schizosaccharomyces pombe (strain 972 / ATCC 24843) (Fission yeast).